The primary structure comprises 321 residues: Probable pectate lyase A (321 aa).

Residues 1 to 18 form the signal peptide; it reads MKFVATLIACGLSGLALA. Asparagine 93 carries an N-linked (GlcNAc...) asparagine glycan. Ca(2+)-binding residues include aspartate 134, aspartate 163, and aspartate 167. Arginine 220 is a catalytic residue. Asparagine 238 is a glycosylation site (N-linked (GlcNAc...) asparagine).

This sequence belongs to the polysaccharide lyase 1 family. The cofactor is Ca(2+).

It is found in the secreted. The enzyme catalyses Eliminative cleavage of (1-&gt;4)-alpha-D-galacturonan to give oligosaccharides with 4-deoxy-alpha-D-galact-4-enuronosyl groups at their non-reducing ends.. Functionally, pectinolytic enzyme consist of four classes of enzymes: pectin lyase, polygalacturonase, pectin methylesterase and rhamnogalacturonase. Among pectinolytic enzymes, pectin lyase is the most important in depolymerization of pectin, since it cleaves internal glycosidic bonds of highly methylated pectins. Favors pectate, the anion, over pectin, the methyl ester. This chain is Probable pectate lyase A (plyA), found in Aspergillus fumigatus (strain ATCC MYA-4609 / CBS 101355 / FGSC A1100 / Af293) (Neosartorya fumigata).